We begin with the raw amino-acid sequence, 238 residues long: uncharacterized protein (238 aa).

It belongs to the chlamydial CPn_0658/CT_538/TC_0825 family.

This is an uncharacterized protein from Chlamydia trachomatis serovar D (strain ATCC VR-885 / DSM 19411 / UW-3/Cx).